The sequence spans 228 residues: Cytochrome c biogenesis ATP-binding export protein CcmA (228 aa).

Residues 2-227 (LSIERLGVGR…LHLERSGAWL (226 aa)) form the ABC transporter domain. Position 34-41 (34-41 (GANGSGKT)) interacts with ATP. Residues 106 to 126 (GAPDGTSSVPASGRSGVAAPP) are disordered.

This sequence belongs to the ABC transporter superfamily. CcmA exporter (TC 3.A.1.107) family. As to quaternary structure, the complex is composed of two ATP-binding proteins (CcmA) and two transmembrane proteins (CcmB).

It is found in the cell inner membrane. The catalysed reaction is heme b(in) + ATP + H2O = heme b(out) + ADP + phosphate + H(+). Part of the ABC transporter complex CcmAB involved in the biogenesis of c-type cytochromes; once thought to export heme, this seems not to be the case, but its exact role is uncertain. Responsible for energy coupling to the transport system. This Paraburkholderia xenovorans (strain LB400) protein is Cytochrome c biogenesis ATP-binding export protein CcmA.